A 298-amino-acid chain; its full sequence is Ethanolamine ammonia-lyase small subunit (298 aa).

The targets protein to the BMC stretch occupies residues Met1–Gln19. Positions 210, 231, and 261 each coordinate adenosylcob(III)alamin.

This sequence belongs to the EutC family. The basic unit is a heterodimer which dimerizes to form tetramers. The heterotetramers trimerize; 6 large subunits form a core ring with 6 small subunits projecting outwards. Interacts with EutS, which targets it to the interior of the BMC. It depends on adenosylcob(III)alamin as a cofactor.

It is found in the bacterial microcompartment. The enzyme catalyses ethanolamine = acetaldehyde + NH4(+). The protein operates within amine and polyamine degradation; ethanolamine degradation. Catalyzes the deamination of various vicinal amino-alcohols to oxo compounds. It is spontaneously inactivated by its substrate and reactivated by EutA. May play a role in bacterial microcompartment (BMC) assembly or maintenance. Directly targeted to the BMC. Its function is as follows. Expression of the eut operon allows this bacteria to use ethanolamine (EA) as a carbon, nitrogen and energy source. It relies on cobalamin (vitamin B12) both as a cofactor for the ethanolamine ammonia-lyase activity and to induce the operon. EA enhances bacterial survival in macrophages in a concentration-dependent manner, suggesting it is an important nutrient during infection. The sequence is that of Ethanolamine ammonia-lyase small subunit from Salmonella typhimurium (strain LT2 / SGSC1412 / ATCC 700720).